The following is a 248-amino-acid chain: Mannose-binding protein C (248 aa).

Residues 1–20 form the signal peptide; sequence MSLFPSLPLLLLSMVAASYS. A Collagen-like domain is found at 42-99; that stretch reads GINGFPGKDGRDGTKGEKGEPGQGLRGLQGPPGKLGPPGNPGPSGSPGPKGQKGDPGK. A disordered region spans residues 43–113; that stretch reads INGFPGKDGR…DSSLAASERK (71 aa). Pro-47 carries the hydroxyproline modification. The segment covering 49 to 61 has biased composition (basic and acidic residues); that stretch reads KDGRDGTKGEKGE. Hydroxyproline is present on residues Pro-73, Pro-79, Pro-82, and Pro-88. The span at 75–87 shows a compositional bias: pro residues; that stretch reads KLGPPGNPGPSGS. The span at 93–102 shows a compositional bias: basic and acidic residues; sequence QKGDPGKSPD. A coiled-coil region spans residues 112-130; the sequence is RKALQTEMARIKKWLTFSL. Residues 134–245 form the C-type lectin domain; the sequence is VGNKFFLTNG…CSTSHLAVCE (112 aa). 2 disulfides stabilise this stretch: Cys-155–Cys-244 and Cys-222–Cys-236.

As to quaternary structure, oligomeric complex of 3 or more homotrimers. Interacts with MASP1 and MASP2. Interacts with MEP1A and MEP1B and may inhibit their catalytic activity. Interacts with CR1 (via Sushi 24 and Sushi 25 domains). (Microbial infection) Interacts with SARS coronavirus-2/SARS-CoV-2 Spike glycoprotein homotrimer; the interaction is calcium-dependent and modulated by Spike glycoprotein glycosylation state. Plasma protein produced mainly in the liver.

It is found in the secreted. Functionally, calcium-dependent lectin involved in innate immune defense. Binds mannose, fucose and N-acetylglucosamine on different microorganisms and activates the lectin complement pathway. Binds to late apoptotic cells, as well as to apoptotic blebs and to necrotic cells, but not to early apoptotic cells, facilitating their uptake by macrophages. May bind DNA. Upon SARS coronavirus-2/SARS-CoV-2 infection, activates the complement lectin pathway which leads to the inhibition SARS-CoV-2 infection and a reduction of the induced inflammatory response. The sequence is that of Mannose-binding protein C from Homo sapiens (Human).